The chain runs to 473 residues: Ribulose bisphosphate carboxylase large chain (473 aa).

Asn116 and Thr166 together coordinate substrate. Lys168 (proton acceptor) is an active-site residue. Lys170 is a binding site for substrate. Mg(2+)-binding residues include Lys194, Asp196, and Glu197. Lys194 carries the N6-carboxylysine modification. Residue His287 is the Proton acceptor of the active site. 3 residues coordinate substrate: Arg288, His320, and Ser372.

This sequence belongs to the RuBisCO large chain family. Type I subfamily. Heterohexadecamer of 8 large chains and 8 small chains. Requires Mg(2+) as cofactor.

The enzyme catalyses 2 (2R)-3-phosphoglycerate + 2 H(+) = D-ribulose 1,5-bisphosphate + CO2 + H2O. The catalysed reaction is D-ribulose 1,5-bisphosphate + O2 = 2-phosphoglycolate + (2R)-3-phosphoglycerate + 2 H(+). RuBisCO catalyzes two reactions: the carboxylation of D-ribulose 1,5-bisphosphate, the primary event in carbon dioxide fixation, as well as the oxidative fragmentation of the pentose substrate. Both reactions occur simultaneously and in competition at the same active site. This Cupriavidus metallidurans (strain ATCC 43123 / DSM 2839 / NBRC 102507 / CH34) (Ralstonia metallidurans) protein is Ribulose bisphosphate carboxylase large chain.